The primary structure comprises 77 residues: U8-lycotoxin-Ls1o (77 aa).

A signal peptide spans 1 to 20 (MKLMIFTGLVLFAIVSLIEA). Residues 21-26 (QAENGK) constitute a propeptide that is removed on maturation.

Belongs to the neurotoxin 19 (CSTX) family. 08 (U8-Lctx) subfamily. Contains 4 disulfide bonds. Expressed by the venom gland.

It is found in the secreted. This is U8-lycotoxin-Ls1o from Lycosa singoriensis (Wolf spider).